A 430-amino-acid polypeptide reads, in one-letter code: Enolase (430 aa).

Residue Gln166 coordinates (2R)-2-phosphoglycerate. Residue Glu208 is the Proton donor of the active site. Residues Asp245, Glu288, and Asp315 each contribute to the Mg(2+) site. Residues Lys340, Arg369, Ser370, and Lys391 each coordinate (2R)-2-phosphoglycerate. Residue Lys340 is the Proton acceptor of the active site.

Belongs to the enolase family. Mg(2+) is required as a cofactor.

It is found in the cytoplasm. Its subcellular location is the secreted. It localises to the cell surface. The catalysed reaction is (2R)-2-phosphoglycerate = phosphoenolpyruvate + H2O. It functions in the pathway carbohydrate degradation; glycolysis; pyruvate from D-glyceraldehyde 3-phosphate: step 4/5. Its function is as follows. Catalyzes the reversible conversion of 2-phosphoglycerate (2-PG) into phosphoenolpyruvate (PEP). It is essential for the degradation of carbohydrates via glycolysis. The sequence is that of Enolase from Clostridium beijerinckii (strain ATCC 51743 / NCIMB 8052) (Clostridium acetobutylicum).